Here is a 427-residue protein sequence, read N- to C-terminus: Putative zinc protease AlbF (427 aa).

His66 contributes to the Zn(2+) binding site. The active-site Proton acceptor is Glu69. His70 and Glu142 together coordinate Zn(2+).

This sequence belongs to the peptidase M16 family. Zn(2+) serves as cofactor.

Required for production of the bacteriocin subtilosin. Could catalyze some step in the processing of presubtilosin. In Bacillus subtilis, this protein is Putative zinc protease AlbF (albF).